The following is a 750-amino-acid chain: Small G protein signaling modulator 3 (750 aa).

Positions 114–305 (GIPHGMRPQL…RIWDLFFYEG (192 aa)) constitute a Rab-GAP TBC domain. Phosphoserine is present on Ser-406. Positions 415-439 (EDDLEALKAKNIKQTELVADLREAI) form a coiled coil. In terms of domain architecture, SH3 spans 480 to 539 (SHRRRAKALLDFERHDDDELGFRKNDIITIISQKDEHCWVGELNGLRGWFPAKFVEVLDE). One can recognise an RUN domain in the interval 555-718 (GVTDLVRGTL…FAFSLSQDWE (164 aa)).

This sequence belongs to the small G protein signaling modulator family. In terms of assembly, interacts with GJA1. Interaction with GJA1 induces its degradation. Interacts via its RUN domain with the C-terminal region of NF2. Interacts with RAB3A, RAB4A, RAB5A, RAB8A, RAB11A, RAP1A, RAP1B, RAP2A, RAP2B and PDCD6I. No interaction with RAB27A. In terms of tissue distribution, widely expressed.

The protein resides in the cytoplasm. Its function is as follows. May play a cooperative role in NF2-mediated growth suppression of cells. In Mus musculus (Mouse), this protein is Small G protein signaling modulator 3.